Here is a 92-residue protein sequence, read N- to C-terminus: RNA-binding protein Hfq (92 aa).

The Sm domain maps to 9–68; it reads DPFLNALRRERVPVSVYLVNGIKLQGTIESFDQFVVLLRNTVSQMVYKHAISTVVPARNV.

The protein belongs to the Hfq family. As to quaternary structure, homohexamer.

Its function is as follows. RNA chaperone that binds small regulatory RNA (sRNAs) and mRNAs to facilitate mRNA translational regulation in response to envelope stress, environmental stress and changes in metabolite concentrations. Also binds with high specificity to tRNAs. This is RNA-binding protein Hfq from Xylella fastidiosa (strain M12).